A 202-amino-acid polypeptide reads, in one-letter code: MCLPAKWLHPVSLIFRVAGIGLAAVSAAAMLTASQCTVYADYGWRPRTVTYSDFPAFVYLVAATAIATLLEAVALFLSWSKKGKSKKSWRVLTMLLLGAVVPALLYTSAGAAFAVGWEDIYYYLEPIGRRFSVCRSSVAGGRFCEHVHVSMWLALGAAVAVSFAEFLTTFRWCHGSGSCSDSDSDSDSDSESGCGHGCHCKH.

Topologically, residues 1-10 (MCLPAKWLHP) are cytoplasmic. Residues 11–31 (VSLIFRVAGIGLAAVSAAAML) traverse the membrane as a helical segment. Over 32–56 (TASQCTVYADYGWRPRTVTYSDFPA) the chain is Extracellular. The chain crosses the membrane as a helical span at residues 57–77 (FVYLVAATAIATLLEAVALFL). The Cytoplasmic segment spans residues 78–94 (SWSKKGKSKKSWRVLTM). Residues 95-115 (LLLGAVVPALLYTSAGAAFAV) traverse the membrane as a helical segment. At 116 to 146 (GWEDIYYYLEPIGRRFSVCRSSVAGGRFCEH) the chain is on the extracellular side. Residues 147–167 (VHVSMWLALGAAVAVSFAEFL) traverse the membrane as a helical segment. Topologically, residues 168–202 (TTFRWCHGSGSCSDSDSDSDSDSESGCGHGCHCKH) are cytoplasmic.

It belongs to the Casparian strip membrane proteins (CASP) family. As to quaternary structure, homodimer and heterodimers.

The protein resides in the cell membrane. The sequence is that of CASP-like protein 1U4 from Sorghum bicolor (Sorghum).